A 546-amino-acid chain; its full sequence is Choline/ethanolamine transporter FLVCR2 (546 aa).

The interval 1–84 (MVNESLNQEE…TLAQPSGLTH (84 aa)) is disordered. Residues 1 to 93 (MVNESLNQEE…HPNELVKEDS (93 aa)) lie on the Cytoplasmic side of the membrane. Residues 22–49 (QADTSYSTQPSVSIHPSVSGHPSVSIHP) show a composition bias toward polar residues. Repeat copies occupy residues 31 to 36 (PSVSIH), 37 to 42 (PSVSGH), 43 to 48 (PSVSIH), 49 to 54 (PSVSGH), 55 to 60 (PSVSID), 61 to 66 (PSVSVH), and 67 to 72 (PSSSAH). The interval 31-84 (PSVSIHPSVSGHPSVSIHPSVSGHPSVSIDPSVSVHPSSSAHPSTLAQPSGLTH) is 9 X 6 AA tandem repeats of P-S-[VS]-S-[VIAG]-[HD]. The span at 54–74 (HPSVSIDPSVSVHPSSSAHPS) shows a compositional bias: low complexity. The stretch at 73-78 (PSTLAQ) is one 8; approximate repeat. The 9; approximate repeat unit spans residues 79–84 (PSGLTH). The helical transmembrane segment at 94–118 (VIKVSKRRWAVVLVFSCYSLCNAFQ) threads the bilayer. Positions 115, 116, and 119 each coordinate choline. The Extracellular portion of the chain corresponds to 119-136 (WIQYGSINNIFMNFYGVS). A helical membrane pass occupies residues 137-164 (AFAIDWLSMCYMLTYIPLLLPVAWMLEK). The Cytoplasmic segment spans residues 165 to 166 (FG). A helical membrane pass occupies residues 167-186 (LRTIAITGSALNCLGAWVKL). Residues 187–193 (GSLEPHL) lie on the Extracellular side of the membrane. Residues 194–222 (FPVTMVGQVICSVAQVFILGMPSRIASVW) traverse the membrane as a helical segment. A choline-binding site is contributed by Leu-212. Residues 223-227 (FGANE) are Cytoplasmic-facing. A helical transmembrane segment spans residues 228 to 253 (VSTACSMAVFGNQLGIAIGFLVPPVL). At 254–258 (VPNIK) the chain is on the extracellular side. Residues 259 to 288 (DQEKLAYHISIMFYIIGGVATLLFILVIIV) form a helical membrane-spanning segment. Over 289 to 324 (FKEKPKYPPSRAQSLSYALATTDASYLSSIVRLFKN) the chain is Cytoplasmic. The helical transmembrane segment at 325–355 (LNFVLLVITYGLNAGAFYALSTLLNRMVIMH) threads the bilayer. A choline-binding site is contributed by Tyr-342. At 356–359 (FPGQ) the chain is on the extracellular side. Residues 360–388 (EVNAGRIGLTIVIAGMFGAMISGIWLDKS) traverse the membrane as a helical segment. Topologically, residues 389–390 (KT) are cytoplasmic. A helical membrane pass occupies residues 391–413 (YKETTLVVYIMTLVGMVVYTFTL). At 414-416 (NLN) the chain is on the extracellular side. The helical transmembrane segment at 417-446 (HLWIVFITADSLGFFMTGYLPLGFEFAVEL) threads the bilayer. The Cytoplasmic portion of the chain corresponds to 447 to 454 (TYPESEGV). The helical transmembrane segment at 455–480 (SSGLLNVSAQVFGIIFTISQGQIIDN) threads the bilayer. Gln-464 is a binding site for choline. Residues 481–482 (YG) are Extracellular-facing. The chain crosses the membrane as a helical span at residues 483–505 (SVPGNIFLCVFLALGSALTAFIK). Topologically, residues 506-546 (SDLRRQRANKDAPETKVQEEEEEEEESNTSKVPTVLSEAHL) are cytoplasmic. The segment covering 511 to 523 (QRANKDAPETKVQ) has biased composition (basic and acidic residues). The interval 511–546 (QRANKDAPETKVQEEEEEEEESNTSKVPTVLSEAHL) is disordered. Phosphoserine is present on Ser-535.

It belongs to the major facilitator superfamily. Feline leukemia virus subgroup C receptor (TC 2.A.1.28.1) family. Interacts with components of electron transfer chain complexes III, IV and V including CYC1, NDUFA4, COX4I1, ATP5PD and ATP5F1C; these interactions occur in the absence of heme and are disrupted upon heme binding. Interacts with ATP2A2; this interaction occurs in the absence of heme and promotes ATP2A2 proteasomal degradation; the complex is dissociated upon heme binding. Interacts with HMOX1; this interaction is potentiated in the presence of heme.

The protein localises to the cell membrane. The protein resides in the mitochondrion membrane. It is found in the endoplasmic reticulum membrane. It carries out the reaction choline(out) = choline(in). It catalyses the reaction ethanolamine(in) = ethanolamine(out). The catalysed reaction is heme b(in) = heme b(out). Choline uniporter that specifically mediates choline uptake at the blood-brain-barrier. Responsible for the majority of choline uptake across the blood-brain-barrier from the circulation into the brain. Choline, a nutrient critical for brain development, is a precursor of phosphatidylcholine, as well as betaine. Also mediates transport of ethanolamine. Choline and ethanolamine transport is not coupled with proton transport and is exclusively driven by the choline gradient across the plasma membrane. However, the presence of an inwardly directed proton gradient enhances choline uptake. Also acts as a heme b transporter. Required to regulate mitochondrial respiration processes, ATP synthesis and thermogenesis. At low heme levels, interacts with components of electron transfer chain (ETC) complexes and ATP2A2, leading to ubiquitin-mediated degradation of ATP2A2 and inhibition of thermogenesis. Upon heme binding, dissociates from ETC complexes to allow switching from mitochondrial ATP synthesis to thermogenesis. This chain is Choline/ethanolamine transporter FLVCR2 (Flvcr2), found in Rattus norvegicus (Rat).